The primary structure comprises 116 residues: Large ribosomal subunit protein bL19 (116 aa).

This sequence belongs to the bacterial ribosomal protein bL19 family.

Functionally, this protein is located at the 30S-50S ribosomal subunit interface and may play a role in the structure and function of the aminoacyl-tRNA binding site. The chain is Large ribosomal subunit protein bL19 from Geobacillus sp. (strain WCH70).